Consider the following 232-residue polypeptide: MANYYEVLGVQASASPEDIKKAYRKLALRWHPDKNPDNKEEAEKKFKLVSEAYEVLSDSKKRSLYDRAGCDSWRAGGGASTPYHSPFDTGYTFRNPEDIFREFFGGLDPFSFEFWDSPFNSDRGGRGHGLRGAFSAGFGEFPAFMEAFSSFNMLGCSGGSHTTFSSTSFGGSSSGSSGFKSVMSSTEMINGHKVTTKRIVENGQERVEVEEDGQLKSVTVNGKEQLKWMDSK.

The region spanning 3-69 is the J domain; sequence NYYEVLGVQA…KKRSLYDRAG (67 aa).

In terms of assembly, interacts with histone deacetylases HDAC4, HDAC6, and SIRT2, HDAC activity is required for antiaggregation.

In terms of biological role, efficient suppressor of aggregation and toxicity of disease-associated polyglutamine proteins. This is DnaJ homolog subfamily B member 8 (DNAJB8) from Homo sapiens (Human).